Here is an 824-residue protein sequence, read N- to C-terminus: Mucosa-associated lymphoid tissue lymphoma translocation protein 1 (824 aa).

A disordered region spans residues 1 to 27 (MSLLGDPLQALPPSAAPTGPLLAPPAG). Serine 2 bears the N-acetylserine mark. Positions 11-27 (LPPSAAPTGPLLAPPAG) are enriched in low complexity. Residues 39-126 (RRLSELLDQA…EVLQLLSPPG (88 aa)) enclose the Death domain. Ig-like C2-type domains are found at residues 125–201 (PGIK…FEFS) and 212–305 (PESF…KKVE). Residue serine 135 is modified to Phosphoserine. 2 cysteine pairs are disulfide-bonded: cysteine 147-cysteine 190 and cysteine 248-cysteine 290. The segment at 348 to 562 (IGNMNYREHP…SLSEKRALTD (215 aa)) is caspase-like. The short motif at 369–376 (LTNLLRQL) is the Nuclear export signal element. Active-site residues include histidine 415 and cysteine 464.

It belongs to the peptidase C14B family. As to quaternary structure, homooligomer; forms oligomers which bind to TRAF6. Forms a complex with CARD14 and MALT1; resulting in the formation of a CBM (CARD14-BCL10-MALT1) complex. Forms a complex with CARD11 and MALT1; resulting in the formation of a CBM (CARD11-BCL10-MALT1) complex. Forms a complex with CARD9 and MALT1; resulting in the formation of a CBM (CARD9-BCL10-MALT1) complex. As to expression, highly expressed in peripheral blood mononuclear cells. Detected at lower levels in bone marrow, thymus and lymph node, and at very low levels in colon and lung.

It localises to the cytoplasm. The protein localises to the perinuclear region. It is found in the nucleus. Protease that enhances BCL10-induced activation: acts via formation of CBM complexes that channel adaptive and innate immune signaling downstream of CARD domain-containing proteins (CARD9, CARD11 and CARD14) to activate NF-kappa-B and MAP kinase p38 pathways which stimulate expression of genes encoding pro-inflammatory cytokines and chemokines. Mediates BCL10 cleavage: MALT1-dependent BCL10 cleavage plays an important role in T-cell antigen receptor-induced integrin adhesion. Involved in the induction of T helper 17 cells (Th17) differentiation. Cleaves RC3H1 and ZC3H12A in response to T-cell receptor (TCR) stimulation which releases their cooperatively repressed targets to promote Th17 cell differentiation. Also mediates cleavage of N4BP1 in T-cells following TCR-mediated activation, leading to N4BP1 inactivation. May also have ubiquitin ligase activity: binds to TRAF6, inducing TRAF6 oligomerization and activation of its ligase activity. This chain is Mucosa-associated lymphoid tissue lymphoma translocation protein 1, found in Homo sapiens (Human).